Consider the following 176-residue polypeptide: Small ribosomal subunit protein uS5 (176 aa).

An S5 DRBM domain is found at 11–74 (LSEVLVDVNR…QAAKKRMMKV (64 aa)).

This sequence belongs to the universal ribosomal protein uS5 family. As to quaternary structure, part of the 30S ribosomal subunit. Contacts proteins S4 and S8.

Functionally, with S4 and S12 plays an important role in translational accuracy. Located at the back of the 30S subunit body where it stabilizes the conformation of the head with respect to the body. The chain is Small ribosomal subunit protein uS5 from Rickettsia conorii (strain ATCC VR-613 / Malish 7).